A 371-amino-acid chain; its full sequence is Neuropeptide Y receptor type 6 (371 aa).

The Extracellular segment spans residues 1–31; sequence MEVSLNDPASNKTSAKSNSSAFFYFESCQSP. 2 N-linked (GlcNAc...) asparagine glycosylation sites follow: N11 and N18. Residues 32–52 form a helical membrane-spanning segment; it reads SLALLLLLIAYTVVLIMGICG. Residues 53–72 are Cytoplasmic-facing; the sequence is NLSLITIIFKKQREAQNVTN. The chain crosses the membrane as a helical span at residues 73–93; that stretch reads ILIANLSLSDILVCVMCIPFT. Topologically, residues 94–111 are extracellular; it reads AIYTLMDRWIFGNTMCKL. A disulfide bridge links C109 with C196. Residues 112-132 form a helical membrane-spanning segment; it reads TSYVQSVSISVSIFSLVLIAI. The Cytoplasmic segment spans residues 133–150; that stretch reads ERYQLIVNPRGWKPSASH. A helical membrane pass occupies residues 151–171; it reads AYWGIMLIWLFSLLLSIPLLL. The Extracellular segment spans residues 172-213; that stretch reads SYHLTDEPFRNLSLPTDLYSHHVVCVEHWPSKTNQLLYSTSL. N182 is a glycosylation site (N-linked (GlcNAc...) asparagine). Residues 214 to 234 form a helical membrane-spanning segment; the sequence is IMLQYFVPLGFMFICYLKIVI. At 235-263 the chain is on the cytoplasmic side; sequence CLHKRNSKIDRRRENESRLTENKRINTML. A helical membrane pass occupies residues 264 to 284; that stretch reads ISIVVTFAACWLPLNTFNVIF. Topologically, residues 285 to 297 are extracellular; sequence DWYHEVLMSCHHD. The helical transmembrane segment at 298 to 318 threads the bilayer; sequence LVFAICHLVAMVSTCINPLFY. Over 319–371 the chain is Cytoplasmic; it reads GFLNRNFQKDLVVLIHHCLCFALRERYENIAISTLHTDESKGSLRVAHIPAGI. A lipid anchor (S-palmitoyl cysteine) is attached at C336.

The protein belongs to the G-protein coupled receptor 1 family. Expressed in hippocampus, striatum, hypothalamus, cerebellum, small intestine, colon and adrenal gland.

Its subcellular location is the cell membrane. Its function is as follows. Receptor for neuropeptide Y and peptide YY. The activity of this receptor is mediated by G proteins that inhibit adenylate cyclase activity. The chain is Neuropeptide Y receptor type 6 (NPY6R) from Oryctolagus cuniculus (Rabbit).